We begin with the raw amino-acid sequence, 285 residues long: Protease HtpX homolog (285 aa).

2 helical membrane passes run 7 to 27 (TAML…MIGG) and 30 to 50 (GMTI…WFSD). H131 is a binding site for Zn(2+). The active site involves E132. H135 is a Zn(2+) binding site. 2 consecutive transmembrane segments (helical) span residues 146 to 166 (ITAT…FFGG) and 177 to 197 (IAGI…QMAI). E202 is a Zn(2+) binding site.

Belongs to the peptidase M48B family. Requires Zn(2+) as cofactor.

The protein localises to the cell inner membrane. The polypeptide is Protease HtpX homolog (Burkholderia ambifaria (strain MC40-6)).